Reading from the N-terminus, the 505-residue chain is Holliday junction branch migration ATPase PINA (505 aa).

One can recognise a PINc domain in the interval asparagine 2–lysine 106. The tract at residues proline 434–aspartate 505 is KH domain. A required for maximum interaction with Hjc and Hjm region spans residues lysine 493–aspartate 505.

In terms of assembly, homohexamer; the central pore (25-31 Angstroms) is large enough to hold dsDNA. In PDB:5F4H two of the 6 subunits are in an ATP-binding competent conformation. Interacts with Holliday junction resolvase Hjc; in the presence of HJ DNA this interaction decreases branch migration but not Y-DNA unwinding. Interacts with helicase Hjm (hel308) which decreases the DNA helicase activity of Hjm. Requires Ca(2+) as cofactor.

The enzyme catalyses ATP + H2O = ADP + phosphate + H(+). In terms of biological role, promotes Holliday junction (HJ) branch migration and unwinds Y-shaped DNA (but not replication forks or dsDNA) in an ATP hydrolysis-dependent manner. Stimulates cleavage by HJ resolvase Hjc. Unwinds Y-shaped and 3'-flap DNA substrates. In the absence of other proteins stabilizes replication forks (prevents spontaneous unwinding); Hjc, Hjm (Hel308) and PINA coordinate HJ migration and cleavage of replication forks in a coordinated way. Inhibits the 5'-3' (but not 3'-5') helicase activity of helicase Hjm (Hel308) on overhang DNA. Probably acts as an ATP-dependent pump that pulls DNA through the hexamer. The polypeptide is Holliday junction branch migration ATPase PINA (Saccharolobus islandicus (strain REY15A) (Sulfolobus islandicus)).